Consider the following 261-residue polypeptide: Small ribosomal subunit protein uS2 (261 aa).

Residues 224–261 (GRQGEDDEAVQQEEVAEGVSKDSLEDLKKTVEEGSNEE) are disordered. The segment covering 228 to 239 (EDDEAVQQEEVA) has biased composition (acidic residues). The segment covering 242–255 (VSKDSLEDLKKTVE) has biased composition (basic and acidic residues).

It belongs to the universal ribosomal protein uS2 family.

This is Small ribosomal subunit protein uS2 (rpsB) from Pediococcus acidilactici.